The chain runs to 403 residues: MSLCGPLNLSLAGEATPCAEPGAPNASAWPPSGRASASPALPIFSMTLGAVSNVLALALLAQAAGRLRRRRSAATFLLFVASLLATDLAGHVIPGALVLRLYAAGRSPAGGACHFLGGCMVFFGLCPLLLGCGMAVERCVGVTRPLLHAARVSAARARLALAVLAALALAVALLPLARVGRYELQYPGTWCFIGLRPAGGWRQALLAGLFAGLGLAALLAALVCNTLSGLALLRARWRRRRSRRRPQACGPDGRRHWGARAPRSASASSSSSVASVPGGSPGRGSARRARAHDVEMVGQLVGIMVVSCICWSPLLVLVVLAVGGWGSSSLQRPLFLAVRLASWNQILDPWVYILLRQAVLRQLLRLLPPRPGAKGSPAGLALTRSAWEASSLRSSRHSSLSHL.

At 1 to 38 (MSLCGPLNLSLAGEATPCAEPGAPNASAWPPSGRASAS) the chain is on the extracellular side. N-linked (GlcNAc...) asparagine glycans are attached at residues Asn-8 and Asn-25. Residues 39-65 (PALPIFSMTLGAVSNVLALALLAQAAG) traverse the membrane as a helical segment. The Cytoplasmic portion of the chain corresponds to 66 to 75 (RLRRRRSAAT). The helical transmembrane segment at 76–99 (FLLFVASLLATDLAGHVIPGALVL) threads the bilayer. Over 100–114 (RLYAAGRSPAGGACH) the chain is Extracellular. A disulfide bridge connects residues Cys-113 and Cys-191. A helical membrane pass occupies residues 115–136 (FLGGCMVFFGLCPLLLGCGMAV). Residues 137-158 (ERCVGVTRPLLHAARVSAARAR) are Cytoplasmic-facing. A helical membrane pass occupies residues 159-180 (LALAVLAALALAVALLPLARVG). Residues 181-204 (RYELQYPGTWCFIGLRPAGGWRQA) are Extracellular-facing. The chain crosses the membrane as a helical span at residues 205-230 (LLAGLFAGLGLAALLAALVCNTLSGL). Residues 231 to 295 (ALLRARWRRR…ARRARAHDVE (65 aa)) are Cytoplasmic-facing. The tract at residues 243–287 (RRRPQACGPDGRRHWGARAPRSASASSSSSVASVPGGSPGRGSAR) is disordered. Low complexity predominate over residues 259-278 (ARAPRSASASSSSSVASVPG). The chain crosses the membrane as a helical span at residues 296-322 (MVGQLVGIMVVSCICWSPLLVLVVLAV). Over 323–333 (GGWGSSSLQRP) the chain is Extracellular. A helical membrane pass occupies residues 334–355 (LFLAVRLASWNQILDPWVYILL). At 356-403 (RQAVLRQLLRLLPPRPGAKGSPAGLALTRSAWEASSLRSSRHSSLSHL) the chain is on the cytoplasmic side.

Belongs to the G-protein coupled receptor 1 family.

Its subcellular location is the cell membrane. Functionally, receptor for prostaglandin E2 (PGE2). The activity of this receptor is mediated by G(q) proteins which activate a phosphatidylinositol-calcium second messenger system. May play a role as an important modulator of renal function. Implicated the smooth muscle contractile response to PGE2 in various tissues. This chain is Prostaglandin E2 receptor EP1 subtype (PTGER1), found in Canis lupus familiaris (Dog).